Reading from the N-terminus, the 319-residue chain is Acetyl-coenzyme A carboxylase carboxyl transferase subunit alpha (319 aa).

A CoA carboxyltransferase C-terminal domain is found at 35-296 (NLDEEVQRLR…KAQLLADLLD (262 aa)).

It belongs to the AccA family. Acetyl-CoA carboxylase is a heterohexamer composed of biotin carboxyl carrier protein (AccB), biotin carboxylase (AccC) and two subunits each of ACCase subunit alpha (AccA) and ACCase subunit beta (AccD).

The protein resides in the cytoplasm. The enzyme catalyses N(6)-carboxybiotinyl-L-lysyl-[protein] + acetyl-CoA = N(6)-biotinyl-L-lysyl-[protein] + malonyl-CoA. It functions in the pathway lipid metabolism; malonyl-CoA biosynthesis; malonyl-CoA from acetyl-CoA: step 1/1. Its function is as follows. Component of the acetyl coenzyme A carboxylase (ACC) complex. First, biotin carboxylase catalyzes the carboxylation of biotin on its carrier protein (BCCP) and then the CO(2) group is transferred by the carboxyltransferase to acetyl-CoA to form malonyl-CoA. The chain is Acetyl-coenzyme A carboxylase carboxyl transferase subunit alpha from Pectobacterium atrosepticum (strain SCRI 1043 / ATCC BAA-672) (Erwinia carotovora subsp. atroseptica).